Consider the following 787-residue polypeptide: ABC transporter G family member 5 (787 aa).

Residues 1-17 (MSRFVDKLPLFDRRPSP) show a composition bias toward basic and acidic residues. Disordered stretches follow at residues 1–25 (MSRF…EGLP) and 71–116 (NDAR…EGQP). Polar residues predominate over residues 74 to 85 (RSGSSTPISSPR). Positions 121–382 (LKFTDLTYSV…FLDFGKPIPD (262 aa)) constitute an ABC transporter domain. Position 175 to 182 (175 to 182 (GASGSGKS)) interacts with ATP. Positions 484–691 (GVLTRRAFIN…PYEAVMQNEF (208 aa)) constitute an ABC transmembrane type-2 domain. Transmembrane regions (helical) follow at residues 500-520 (VFII…TIFW), 535-555 (FFAI…PVFL), 576-596 (VLSH…AFAL), 599-619 (FFSV…AIVL), 620-640 (ASFW…THVM), 641-661 (LGFP…GFFI), 728-745 (SLGV…GPDF), and 760-780 (LWIT…SLLL).

Belongs to the ABC transporter superfamily. ABCG family. Eye pigment precursor importer (TC 3.A.1.204) subfamily. In terms of tissue distribution, expressed in the crown root primordia, endodermis, pericycle and stele in the root, in leaf primordia of main and axillary shoots, and in the vascular cells and leaf epidermis of older leaves.

The protein localises to the cell membrane. Essential transporter for growth and development under abiotic stress. Mediates shoot branching by promoting the outgrowth of lateral shoots. Required for salt tolerance via Na/K homeostasis, at least partly by regulating SKC1/OsHKT1;5. Necessary for hypodermal suberization of roots, which contributes to formation of the apoplastic barrier. The polypeptide is ABC transporter G family member 5 (Oryza sativa subsp. japonica (Rice)).